The following is a 432-amino-acid chain: MASPVAAQAGKLLRALALRPRFLAAGSQAVQLTSRRWLNLQEYQSKKLMSDNGVRVQRFFVADTANEALEAAKRLNAKEIVLKAQILAGGRGKGVFNSGLKGGVHLTKDPNVVGQLAKQMIGYNLATKQTPKEGVKVNKVMVAEALDISRETYLAILMDRSCNGPVLVGSPQGGVDIEEVAASNPELIFKEQIDIFEGIKDSQAQRMAENLGFVGPLKSQAADQITKLYNLFLKIDATQVEVNPFGETPEGQVVCFDAKINFDDNAEFRQKDIFAMDDKSENEPIENEAAKYDLKYIGLDGNIACFVNGAGLAMATCDIIFLNGGKPANFLDLGGGVKEAQVYQAFKLLTADPKVEAILVNIFGGIVNCAIIANGITKACRELELKVPLVVRLEGTNVQEAQKILNNSGLPITSAIDLEDAAKKAVASVAKK.

The transit peptide at 1–37 (MASPVAAQAGKLLRALALRPRFLAAGSQAVQLTSRRW) directs the protein to the mitochondrion. Positions 46-274 (KKLMSDNGVR…NAEFRQKDIF (229 aa)) constitute an ATP-grasp domain. Glutamine 57 serves as a coordination point for GTP. At lysine 73 the chain carries N6-acetyllysine. Lysine 78 bears the N6-succinyllysine mark. 90 to 92 (GRG) serves as a coordination point for GTP. Lysine 132 and lysine 139 each carry N6-acetyllysine. Leucine 146 lines the GTP pocket. The residue at position 161 (serine 161) is a Phosphoserine. Residues lysine 200, lysine 218, and lysine 227 each carry the N6-acetyllysine modification. Positions 243 and 257 each coordinate Mg(2+). N6-acetyllysine occurs at positions 271 and 291. Substrate is bound at residue asparagine 308. N6-succinyllysine is present on lysine 338. Residue lysine 347 is modified to N6-acetyllysine. Residue 365–367 (GIV) coordinates substrate. 2 positions are modified to N6-acetyllysine: lysine 386 and lysine 423.

This sequence belongs to the succinate/malate CoA ligase beta subunit family. GTP-specific subunit beta subfamily. In terms of assembly, heterodimer of an alpha and a beta subunit. The beta subunit determines specificity for GTP. Requires Mg(2+) as cofactor. In terms of tissue distribution, mainly expressed in liver, kidney, heart, spleen and skeletal muscle. Also found in intestine and colon, and in low amounts in lung, brain, prostate, testis and ovary.

Its subcellular location is the mitochondrion. It carries out the reaction GTP + succinate + CoA = succinyl-CoA + GDP + phosphate. Its pathway is carbohydrate metabolism; tricarboxylic acid cycle; succinate from succinyl-CoA (ligase route): step 1/1. In terms of biological role, GTP-specific succinyl-CoA synthetase functions in the citric acid cycle (TCA), coupling the hydrolysis of succinyl-CoA to the synthesis of GTP and thus represents the only step of substrate-level phosphorylation in the TCA. The beta subunit provides nucleotide specificity of the enzyme and binds the substrate succinate, while the binding sites for coenzyme A and phosphate are found in the alpha subunit. The chain is Succinate--CoA ligase [GDP-forming] subunit beta, mitochondrial from Homo sapiens (Human).